Consider the following 1813-residue polypeptide: Nonribosomal peptide synthetase 1 (1813 aa).

Positions 89–494 (EKARRDPSRQ…GRGDQQVKLR (406 aa)) are adenylation. One can recognise a Carrier 1 domain in the interval 624 to 699 (EPQSERERQL…ELAITLKHSD (76 aa)). O-(pantetheine 4'-phosphoryl)serine is present on Ser660. Positions 738 to 1159 (DVYPCTTLQE…LPMTDDELAE (422 aa)) are condensation 1. A Carrier 2 domain is found at 1282 to 1358 (QVTTPKQQKL…DMADIAKESL (77 aa)). Ser1319 carries the O-(pantetheine 4'-phosphoryl)serine modification. The condensation 2 stretch occupies residues 1427-1806 (FYLDAAVDQS…STLFQTDVME (380 aa)).

Belongs to the NRP synthetase family.

Its pathway is siderophore biosynthesis. Nonribosomal peptide synthetase; part of the gene cluster that mediates the biosynthesis of hydroxamate-containing siderophores that play a critical role in virulence via intracellular iron acquisition during macrophage infection. The polypeptide is Nonribosomal peptide synthetase 1 (Ajellomyces capsulatus (Darling's disease fungus)).